A 273-amino-acid chain; its full sequence is Phosphate import ATP-binding protein PstB 1 (273 aa).

The ABC transporter domain occupies 27 to 268; that stretch reads ISIEHLSLYY…PLKKQTEDYI (242 aa). 59-66 serves as a coordination point for ATP; it reads GPSGCGKS.

Belongs to the ABC transporter superfamily. Phosphate importer (TC 3.A.1.7) family. The complex is composed of two ATP-binding proteins (PstB), two transmembrane proteins (PstC and PstA) and a solute-binding protein (PstS).

It localises to the cell inner membrane. It carries out the reaction phosphate(out) + ATP + H2O = ADP + 2 phosphate(in) + H(+). In terms of biological role, part of the ABC transporter complex PstSACB involved in phosphate import. Responsible for energy coupling to the transport system. The chain is Phosphate import ATP-binding protein PstB 1 from Vibrio cholerae serotype O1 (strain ATCC 39315 / El Tor Inaba N16961).